Consider the following 89-residue polypeptide: Small ribosomal subunit protein uS15 (89 aa).

This sequence belongs to the universal ribosomal protein uS15 family. In terms of assembly, part of the 30S ribosomal subunit. Forms a bridge to the 50S subunit in the 70S ribosome, contacting the 23S rRNA.

In terms of biological role, one of the primary rRNA binding proteins, it binds directly to 16S rRNA where it helps nucleate assembly of the platform of the 30S subunit by binding and bridging several RNA helices of the 16S rRNA. Forms an intersubunit bridge (bridge B4) with the 23S rRNA of the 50S subunit in the ribosome. The sequence is that of Small ribosomal subunit protein uS15 from Leuconostoc mesenteroides subsp. mesenteroides (strain ATCC 8293 / DSM 20343 / BCRC 11652 / CCM 1803 / JCM 6124 / NCDO 523 / NBRC 100496 / NCIMB 8023 / NCTC 12954 / NRRL B-1118 / 37Y).